The chain runs to 105 residues: Small ribosomal subunit protein uS10 (105 aa).

The protein belongs to the universal ribosomal protein uS10 family. Part of the 30S ribosomal subunit.

Its function is as follows. Involved in the binding of tRNA to the ribosomes. The polypeptide is Small ribosomal subunit protein uS10 (Oleidesulfovibrio alaskensis (strain ATCC BAA-1058 / DSM 17464 / G20) (Desulfovibrio alaskensis)).